We begin with the raw amino-acid sequence, 555 residues long: Formate--tetrahydrofolate ligase (555 aa).

The protein belongs to the formate--tetrahydrofolate ligase family.

It catalyses the reaction (6S)-5,6,7,8-tetrahydrofolate + formate + ATP = (6R)-10-formyltetrahydrofolate + ADP + phosphate. Its pathway is one-carbon metabolism; tetrahydrofolate interconversion. The chain is Formate--tetrahydrofolate ligase from Porphyromonas gingivalis (strain ATCC BAA-308 / W83).